Reading from the N-terminus, the 359-residue chain is MEYNKKLYEAIERVAIKNDALKKELETVVTDFKKIKEINIQLKKTTKIAEAFAKYKQKLDTGIAAEKILNTEKDLELIELAQMDLDEAKINIPIIENDLKIMLLPTDPNDDKNVIVEMRPAAGGDESSIFVGNLFDTYRAYAENNNWKMKIIEMTPNAVGFSFISFMISGEEVYSRMKFESGVHRVQRVPATESKGRVHTSTITVAVLPEQDEVDVVINPTELRIDTYRASGAGGQHVNRTESAVRITHIPTGVVAACQEGKSQIENRETAMKMLRAKLWEAAQEQQNAEFANLRKNQVGTGDRSEKIRTYNYPQNRVTDHRINLTLNKLDQIMMGELDEIIDALIADEQTGLMANLDI.

Q236 is subject to N5-methylglutamine.

This sequence belongs to the prokaryotic/mitochondrial release factor family. Post-translationally, methylated by PrmC. Methylation increases the termination efficiency of RF1.

The protein localises to the cytoplasm. Functionally, peptide chain release factor 1 directs the termination of translation in response to the peptide chain termination codons UAG and UAA. The protein is Peptide chain release factor 1 of Ureaplasma parvum serovar 3 (strain ATCC 27815 / 27 / NCTC 11736).